The primary structure comprises 165 residues: Neurotrophin-3 (165 aa).

Positions 1–3 are cleaved as a signal peptide; sequence IQS. Positions 4–119 are excised as a propeptide; the sequence is TSMDQGSLSE…VLNRTSRRKR (116 aa). The tract at residues 32–61 is disordered; it reads KVPKQAARTKDGTQTTAKKTEAEPEATANK. N-linked (GlcNAc...) asparagine glycosylation occurs at asparagine 112.

This sequence belongs to the NGF-beta family.

The protein resides in the secreted. Seems to promote the survival of visceral and proprioceptive sensory neurons. This is Neurotrophin-3 (NTF3) from Xenopeltis unicolor (Sunbeam snake).